A 562-amino-acid chain; its full sequence is Teichoic acid ribitol-phosphate polymerase TarL (562 aa).

Belongs to the CDP-glycerol glycerophosphotransferase family.

The protein localises to the cell membrane. It catalyses the reaction 4-O-[di(2R)-glycerylphospho]-N-acetyl-beta-D-mannosaminyl-(1-&gt;4)-N-acetyl-alpha-D-glucosaminyl di-trans,octa-cis-undecaprenyl diphosphate + n CDP-L-ribitol = 4-O-[(D-ribitylphospho)(n)-di{(2R)-glycerylphospho}]-N-acetyl-beta-D-mannosaminyl-(1-&gt;4)-N-acetyl-alpha-D-glucosaminyl di-trans,octa-cis-undecaprenyl diphosphate + n CMP + n H(+). Its pathway is cell wall biogenesis; poly(ribitol phosphate) teichoic acid biosynthesis. Its function is as follows. Responsible for the polymerization of the main chain of the major teichoic acid by sequential transfer of ribitol phosphate units from CDP-ribitol to the second glycerol phosphate attached to the disaccharide linkage unit. Synthesizes polymers of more than 40 ribitol phosphate units in length. The polypeptide is Teichoic acid ribitol-phosphate polymerase TarL (tarL) (Staphylococcus aureus (strain NCTC 8325 / PS 47)).